Here is a 463-residue protein sequence, read N- to C-terminus: Type I restriction enzyme StySPI specificity subunit (463 aa).

Belongs to the type-I restriction system S methylase family. As to quaternary structure, the type I restriction/modification system is composed of three polypeptides R, M and S; the restriction enzyme has stoichiometry R(2)M(2)S(1) while the methyltransferase is M(2)S(1).

The specificity (S) subunit of a type I restriction enzyme; this subunit dictates DNA sequence specificity. The M and S subunits together form a methyltransferase (MTase) that methylates A-2 on the top strand and A-3 on the bottom strand of the sequence 5'-AACN(6)GTRC-3'. In the presence of the R subunit the complex can also act as an endonuclease, binding to the same target sequence but cutting the DNA some distance from this site. Whether the DNA is cut or modified depends on the methylation state of the target sequence. When the target site is unmodified, the DNA is cut. When the target site is hemimethylated, the complex acts as a maintenance MTase modifying the DNA so that both strands become methylated. After locating a non-methylated recognition site, the enzyme complex serves as a molecular motor that translocates DNA in an ATP-dependent manner until a collision occurs that triggers cleavage. The polypeptide is Type I restriction enzyme StySPI specificity subunit (Salmonella potsdam).